The primary structure comprises 727 residues: Glucans biosynthesis glucosyltransferase H (727 aa).

Positions 18 to 38 are disordered; the sequence is SAMPNERPGAMEPQNLSKMPE. 7 helical membrane-spanning segments follow: residues 58-78, 97-117, 278-298, 408-428, 460-480, 496-516, and 572-592; these read FLVVGGALLLSLFAIYEMGAV, VNFCWIALAFCSGIAGFLILL, LQQFAARIYGPVIGTGLGWWV, IMAYLSSPFWLMLILTGLMLA, LFYITMGVLFGPKVFGVLLLL, IFSVIFEVILSALIAPIMMFI, and LLAWMSPALIGLWIAVPISAW.

The protein belongs to the glycosyltransferase 2 family. OpgH subfamily.

Its subcellular location is the cell inner membrane. The protein operates within glycan metabolism; osmoregulated periplasmic glucan (OPG) biosynthesis. Functionally, involved in the biosynthesis of osmoregulated periplasmic glucans (OPGs). The protein is Glucans biosynthesis glucosyltransferase H of Shewanella baltica (strain OS185).